A 351-amino-acid chain; its full sequence is Molybdenum import ATP-binding protein ModC (351 aa).

The ABC transporter domain maps to 1–229 (MLQINVKKQL…PIFAPWKGES (229 aa)). 31–38 (GLSGSGKT) lines the ATP pocket. A Mop domain is found at 289–351 (QTSIRNILRG…YVQIKAVSVM (63 aa)).

This sequence belongs to the ABC transporter superfamily. Molybdate importer (TC 3.A.1.8) family. In terms of assembly, the complex is composed of two ATP-binding proteins (ModC), two transmembrane proteins (ModB) and a solute-binding protein (ModA).

The protein localises to the cell inner membrane. The enzyme catalyses molybdate(out) + ATP + H2O = molybdate(in) + ADP + phosphate + H(+). Part of the ABC transporter complex ModABC involved in molybdenum import. Responsible for energy coupling to the transport system. The sequence is that of Molybdenum import ATP-binding protein ModC from Haemophilus influenzae (strain ATCC 51907 / DSM 11121 / KW20 / Rd).